We begin with the raw amino-acid sequence, 468 residues long: Procollagen C-endopeptidase enhancer 1 (468 aa).

Residues 1 to 24 (MLPAALTSLLGPFLLAWVLPLARG) form the signal peptide. N-linked (GlcNAc...) asparagine glycosylation is present at asparagine 28. Cystine bridges form between cysteine 36-cysteine 62, cysteine 89-cysteine 111, cysteine 158-cysteine 185, and cysteine 212-cysteine 235. 2 consecutive CUB domains span residues 36-148 (CGGD…YSGR) and 158-272 (CGGR…YRTL). At threonine 41 the chain carries Phosphothreonine. A Phosphoserine modification is found at serine 49. The segment at 271-341 (TLPRDAVEKE…VAPDAPSITC (71 aa)) is disordered. Basic and acidic residues predominate over residues 272-281 (LPRDAVEKES). 2 disulfides stabilise this stretch: cysteine 341-cysteine 409 and cysteine 356-cysteine 460. The NTR domain occupies 341 to 460 (CPKQYKRSGT…ILSNLSKRKC (120 aa)). An N-linked (GlcNAc...) asparagine glycan is attached at asparagine 454.

As to quaternary structure, interacts with EFEMP2. Expressed at highest levels in collagen-rich tissues, especially tendon. Also expressed in cornea and sterna.

The protein localises to the secreted. Binds to the C-terminal propeptide of type I procollagen and enhances procollagen C-proteinase activity. This Rattus norvegicus (Rat) protein is Procollagen C-endopeptidase enhancer 1 (Pcolce).